The primary structure comprises 1178 residues: Ubiquitin carboxyl-terminal hydrolase cyk-3 (1178 aa).

3 EF-hand domains span residues 28 to 60 (EEYR…GAQI), 175 to 210 (FPDS…LCRG), and 211 to 246 (PLPG…LNVP). Ca(2+)-binding residues include Asp-188, Asn-190, Asp-192, Gln-194, Glu-199, Asp-224, Asp-226, Asp-228, and Glu-235. The DUSP domain maps to 296-410 (ESRKMELQIV…VDSQFTRKYL (115 aa)). The USP domain maps to 570 to 1175 (VGLVNYGNFC…GAYLLFYERK (606 aa)). Cys-579 functions as the Nucleophile in the catalytic mechanism. Positions 681-725 (SNKSLHPSPEESEGTDSNKLSDSSKKKEADKEEADEEKAERSWTE) are disordered. Residue His-1134 is the Proton acceptor of the active site.

This sequence belongs to the peptidase C19 family. In terms of tissue distribution, expressed in excretory cells, coelomocytes, head neurons, hypodermal cells, germ cells, oocytes, sperm and pharynx (at protein level).

It is found in the nucleus. Its subcellular location is the cytoplasm. The protein localises to the cytoskeleton. The protein resides in the microtubule organizing center. It carries out the reaction Thiol-dependent hydrolysis of ester, thioester, amide, peptide and isopeptide bonds formed by the C-terminal Gly of ubiquitin (a 76-residue protein attached to proteins as an intracellular targeting signal).. Functionally, ubiquitin-protein hydrolase which cleaves ubiquitin from ubiquitinated proteins. Plays a role in embryo osmoregulation. Probably by regulating osmosis, controls actin redistribution in the 1-cell embryos and thus actin-dependent processes such as cytokinesis and P-granules segregation. During the first embryonic mitotic division, involved in the formation of a functional microtubule organizing center provided by the male pronucleus. Acts as a positive regulator of the mTORC1 signaling. The polypeptide is Ubiquitin carboxyl-terminal hydrolase cyk-3 (Caenorhabditis elegans).